A 524-amino-acid chain; its full sequence is Cytokinin dehydrogenase 7 (524 aa).

Residues 1 to 22 form the signal peptide; it reads MAARCSIAFMIMASCLSVVVSG. A glycan (N-linked (GlcNAc...) asparagine) is linked at Asn-42. The 179-residue stretch at 55-233 folds into the FAD-binding PCMH-type domain; that stretch reads VAAAPEAVLH…TRARIGLMPA (179 aa). FAD contacts are provided by Gly-91 and Gly-93. His-94 is subject to Pros-8alpha-FAD histidine. Residues Ser-95 and Gln-99 each coordinate FAD. Asn-121 is a glycosylation site (N-linked (GlcNAc...) asparagine). Residues Asp-157, Thr-162, Ser-168, Ile-172, and Ile-223 each coordinate FAD. Asn-277 and Asn-320 each carry an N-linked (GlcNAc...) asparagine glycan. Tyr-472, Ser-507, and Gln-510 together coordinate FAD.

The protein belongs to the oxygen-dependent FAD-linked oxidoreductase family. In terms of assembly, monomer. The cofactor is FAD.

The protein resides in the secreted. It localises to the extracellular space. The enzyme catalyses N(6)-dimethylallyladenine + A + H2O = 3-methyl-2-butenal + adenine + AH2. In terms of biological role, catalyzes the oxidation of cytokinins, a family of N(6)-substituted adenine derivatives that are plant hormones, where the substituent is an isopentenyl group. The protein is Cytokinin dehydrogenase 7 (CKX7) of Oryza sativa subsp. japonica (Rice).